We begin with the raw amino-acid sequence, 283 residues long: N-terminal Xaa-Pro-Lys N-methyltransferase 2 (283 aa).

Residues Gly124, Arg129, Asp146, 174–175 (LQ), Gln190, and His195 contribute to the S-adenosyl-L-methionine site.

The protein belongs to the methyltransferase superfamily. NTM1 family.

The protein resides in the nucleus. The catalysed reaction is N-terminal L-alanyl-L-prolyl-L-lysyl-[protein] + S-adenosyl-L-methionine = N-terminal N-methyl-L-alanyl-L-prolyl-L-lysyl-[protein] + S-adenosyl-L-homocysteine + H(+). It carries out the reaction N-terminal L-prolyl-L-prolyl-L-lysyl-[protein] + S-adenosyl-L-methionine = N-terminal N-methyl-L-prolyl-L-prolyl-L-lysyl-[protein] + S-adenosyl-L-homocysteine + H(+). It catalyses the reaction N-terminal L-seryl-L-prolyl-L-lysyl-[protein] + S-adenosyl-L-methionine = N-terminal N-methyl-L-seryl-L-prolyl-L-lysyl-[protein] + S-adenosyl-L-homocysteine + H(+). Functionally, alpha N-methyltransferase that methylates the N-terminus of target proteins containing the N-terminal motif [Ala/Pro/Ser]-Pro-Lys when the initiator Met is cleaved. Specifically catalyzes monomethylation of exposed alpha-amino group of Ala or Ser residue in the [Ala/Ser]-Pro-Lys motif and Pro in the Pro-Pro-Lys motif. Predominantly functions as a mono-methyltransferase but is also able to di-/tri-methylate the GPKRIA peptide and di-methylate the PPKRIA peptide (in vitro). May activate NTMT1 by priming its substrates for trimethylation. The protein is N-terminal Xaa-Pro-Lys N-methyltransferase 2 of Homo sapiens (Human).